The chain runs to 169 residues: MFTSAHANRSPLTSASVRRPSHSVVEHSATGLISEIVYREDQPMMTQLLLLPLLQQLGQQSRWQLWLTPQQKLSKEWVQSSGLPLSKVMQINQMSPCNTLESMIRALRTGNYNVVIGWLTDELTEQEHERLALAAEEGHPMGFIMRPVRNTSQPGRQLSGLKIHSNLYH.

Residues 1–16 (MFTSAHANRSPLTSAS) are compositionally biased toward polar residues. The disordered stretch occupies residues 1 to 20 (MFTSAHANRSPLTSASVRRP). Residues 106–112 (ALRTGNY) are ftsZ binding. The tract at residues 162–169 (KIHSNLYH) is lon protease binding.

It belongs to the SulA family. As to quaternary structure, interacts with FtsZ. Post-translationally, is rapidly cleaved and degraded by the Lon protease once DNA damage is repaired.

Its function is as follows. Component of the SOS system and an inhibitor of cell division. Accumulation of SulA causes rapid cessation of cell division and the appearance of long, non-septate filaments. In the presence of GTP, binds a polymerization-competent form of FtsZ in a 1:1 ratio, thus inhibiting FtsZ polymerization and therefore preventing it from participating in the assembly of the Z ring. This mechanism prevents the premature segregation of damaged DNA to daughter cells during cell division. In Klebsiella aerogenes (Enterobacter aerogenes), this protein is Cell division inhibitor SulA.